A 441-amino-acid polypeptide reads, in one-letter code: Probable glycine dehydrogenase (decarboxylating) subunit 1 (441 aa).

Belongs to the GcvP family. N-terminal subunit subfamily. As to quaternary structure, the glycine cleavage system is composed of four proteins: P, T, L and H. In this organism, the P 'protein' is a heterodimer of two subunits.

It catalyses the reaction N(6)-[(R)-lipoyl]-L-lysyl-[glycine-cleavage complex H protein] + glycine + H(+) = N(6)-[(R)-S(8)-aminomethyldihydrolipoyl]-L-lysyl-[glycine-cleavage complex H protein] + CO2. The glycine cleavage system catalyzes the degradation of glycine. The P protein binds the alpha-amino group of glycine through its pyridoxal phosphate cofactor; CO(2) is released and the remaining methylamine moiety is then transferred to the lipoamide cofactor of the H protein. The protein is Probable glycine dehydrogenase (decarboxylating) subunit 1 of Halobacterium salinarum (strain ATCC 700922 / JCM 11081 / NRC-1) (Halobacterium halobium).